The primary structure comprises 144 residues: Monooxygenase ptaG (144 aa).

It belongs to the avfA family.

It functions in the pathway secondary metabolite biosynthesis. Monooxygenase; part of the gene cluster that mediates the biosynthesis of pestheic acid, a diphenyl ether which is a biosynthetic precursor of the unique chloropupukeananes. The biosynthesis initiates from condensation of acetate and malonate units catalyzed by the non-reducing PKS ptaA. As the ptaA protein is TE/CLC domain-deficient, hydrolysis and Claisen cyclization of the polyketide could be catalyzed by ptaB containing a beta-lactamase domain. The ptaB protein might hydrolyze the thioester bond between the ACP of ptaA and the intermediate to release atrochrysone carboxylic acid, which is spontaneously dehydrated to form endocrocin anthrone. Endocrocin anthrone is then converted to endocrocin, catalyzed by the anthrone oxygenase ptaC. Spontaneous decarboxylation of endocrocin occurs to generate emodin. An O-methyltransferase (ptaH or ptaI) could methylate emodin to form physcion. PtaJ could then catalyze the oxidative cleavage of physcion, and rotation of the intermediate could then afford desmethylisosulochrin. PtaF, a putative NADH-dependent oxidoreductase, might also participate in the oxidative cleavage step. Desmethylisosulochrin is then transformed by another O-methyltransferase (ptaH or ptaI) to form isosulochrin. Chlorination of isosulochrin by ptaM in the cyclohexadienone B ring then produces chloroisosulochrin. PtaE is responsible for the oxidative coupling reactions of both benzophenones isosulochrin and chloroisosulochrin to RES-1214-1 and pestheic acid respectively, regardless of chlorination. This chain is Monooxygenase ptaG, found in Pestalotiopsis fici (strain W106-1 / CGMCC3.15140).